We begin with the raw amino-acid sequence, 399 residues long: tRNA-specific 2-thiouridylase MnmA (399 aa).

ATP is bound by residues 21–28 and leucine 47; that span reads AMSGGVDS. Cysteine 115 functions as the Nucleophile in the catalytic mechanism. An intrachain disulfide couples cysteine 115 to cysteine 211. Glycine 139 is a binding site for ATP. The tract at residues 161–163 is interaction with tRNA; that stretch reads RDQ. The active-site Cysteine persulfide intermediate is cysteine 211.

This sequence belongs to the MnmA/TRMU family.

The protein resides in the cytoplasm. The enzyme catalyses S-sulfanyl-L-cysteinyl-[protein] + uridine(34) in tRNA + AH2 + ATP = 2-thiouridine(34) in tRNA + L-cysteinyl-[protein] + A + AMP + diphosphate + H(+). Its function is as follows. Catalyzes the 2-thiolation of uridine at the wobble position (U34) of tRNA, leading to the formation of s(2)U34. The chain is tRNA-specific 2-thiouridylase MnmA from Parvibaculum lavamentivorans (strain DS-1 / DSM 13023 / NCIMB 13966).